The following is a 138-amino-acid chain: Translation initiation factor 2 subunit beta (138 aa).

This sequence belongs to the eIF-2-beta/eIF-5 family. Heterotrimer composed of an alpha, a beta and a gamma chain.

In terms of biological role, eIF-2 functions in the early steps of protein synthesis by forming a ternary complex with GTP and initiator tRNA. This Methanopyrus kandleri (strain AV19 / DSM 6324 / JCM 9639 / NBRC 100938) protein is Translation initiation factor 2 subunit beta.